We begin with the raw amino-acid sequence, 390 residues long: Magnesium-protoporphyrin IX monomethyl ester [oxidative] cyclase (390 aa).

The protein belongs to the AcsF family. The cofactor is Fe cation.

It carries out the reaction Mg-protoporphyrin IX 13-monomethyl ester + 3 NADPH + 3 O2 + 2 H(+) = 3,8-divinyl protochlorophyllide a + 3 NADP(+) + 5 H2O. The protein operates within porphyrin-containing compound metabolism; chlorophyll biosynthesis (light-independent). In terms of biological role, catalyzes the formation of the isocyclic ring in chlorophyll biosynthesis. Mediates the cyclase reaction, which results in the formation of divinylprotochlorophyllide (Pchlide) characteristic of all chlorophylls from magnesium-protoporphyrin IX 13-monomethyl ester (MgPMME). The protein is Magnesium-protoporphyrin IX monomethyl ester [oxidative] cyclase of Prochlorococcus marinus (strain MIT 9215).